A 204-amino-acid chain; its full sequence is CASP-like protein 2U2 (204 aa).

Over 1 to 36 the chain is Cytoplasmic; sequence MGVLGGDAHVPIGSQVSPGSVVVTNNESFGHRKLLK. A helical membrane pass occupies residues 37 to 57; the sequence is GVDFLVRIKAFAFCLAVIVLL. Residues 58-84 are Extracellular-facing; the sequence is KNNVQTTVIAPGIVLQAKYNNTKAPVS. Asn77 carries N-linked (GlcNAc...) asparagine glycosylation. The helical transmembrane segment at 85-105 threads the bilayer; sequence LLVLASICCGYAFLQAVVSLL. Over 106-117 the chain is Cytoplasmic; that stretch reads SFIRDKRVLNNT. A helical membrane pass occupies residues 118-138; the sequence is VLAWLTFLLDQVLTYLLLGSA. The Extracellular portion of the chain corresponds to 139-170; the sequence is AATAEAAYIAKRGEDKVQWKAVCGPFKRFCDH. Residues 171–191 form a helical membrane-spanning segment; it reads FAATVFLSFIAVIAFAVSAAI. Topologically, residues 192–204 are cytoplasmic; the sequence is SAYYLFRKSKGFK.

The protein belongs to the Casparian strip membrane proteins (CASP) family. As to quaternary structure, homodimer and heterodimers.

It is found in the cell membrane. The polypeptide is CASP-like protein 2U2 (Selaginella moellendorffii (Spikemoss)).